The following is a 706-amino-acid chain: ABC transporter D family member 2, chloroplastic (706 aa).

The N-terminal 44 residues, 1–44 (MILMITAPVCPPHLLLRHSSLLRHESSIGNFHRKKNPRFRTVSC), are a transit peptide targeting the chloroplast. S45 is modified (N-acetylserine). 5 helical membrane-spanning segments follow: residues 88-108 (LAAVFALTLATTGISVGFNFL), 124-144 (FTKQLFYYLCAFAGGIPFFVL), 200-222 (TALSFSLTLVNATIDLISFSNIL), 237-257 (SFGGTAISVFLGKGLVNLNFL), and 326-346 (ILPVAVVAPMYFSGKIEFGVI). Residues 88 to 372 (LAAVFALTLA…VVYQFQAISS (285 aa)) enclose the ABC transmembrane type-1 domain. The 268-residue stretch at 430 to 697 (LEIEELTLQT…DAQDSLYGRL (268 aa)) folds into the ABC transporter domain. Residue 464–471 (GPSGSGKT) coordinates ATP. Residues 545–569 (TTPGGSNIDGSPPLLIREDGNEKPT) are disordered. A compositionally biased stretch (basic and acidic residues) spans 560–569 (IREDGNEKPT).

This sequence belongs to the ABC transporter superfamily. ABCD family. Peroxisomal fatty acyl CoA transporter (TC 3.A.1.203) subfamily. As to quaternary structure, homodimer or heterodimer.

The protein resides in the membrane. Its subcellular location is the plastid. It localises to the chloroplast. This Arabidopsis thaliana (Mouse-ear cress) protein is ABC transporter D family member 2, chloroplastic (ABCC2).